Here is a 329-residue protein sequence, read N- to C-terminus: D-alanine--D-alanine ligase (329 aa).

The 207-residue stretch at 121–327 (KLWYDALDIP…FSEFLAQCVT (207 aa)) folds into the ATP-grasp domain. 151–206 (AFGHWGSIFVKAARQGSSVGCYKVTTEDQIAPAIEAAFGFSEQVLVEQAVKPRELE) contacts ATP. 3 residues coordinate Mg(2+): Asp-281, Glu-294, and Asn-296.

This sequence belongs to the D-alanine--D-alanine ligase family. Requires Mg(2+) as cofactor. Mn(2+) serves as cofactor.

The protein resides in the cytoplasm. The catalysed reaction is 2 D-alanine + ATP = D-alanyl-D-alanine + ADP + phosphate + H(+). It participates in cell wall biogenesis; peptidoglycan biosynthesis. Cell wall formation. The protein is D-alanine--D-alanine ligase of Vibrio cholerae serotype O1 (strain ATCC 39541 / Classical Ogawa 395 / O395).